Reading from the N-terminus, the 200-residue chain is MARYTGPTWKISRRLGISLSGTGKELQKRPYPPGQHGPGQRRKLSEYGLQLQEKQKLRHMYGVNERQFRKTFDEAGKMPGKHGENFMILLESRLDNLVYRLGLARTRRQARQLVTHGHILVDGSRVNIPSYRVKPGQTIAVREKSRNLQVIKEAIEVNNFVPDYLTFDPEKLEGTYTRLPERSELPAEINEALIVEFYSR.

Positions 21–42 are disordered; that stretch reads GTGKELQKRPYPPGQHGPGQRR. One can recognise an S4 RNA-binding domain in the interval 92-155; that stretch reads SRLDNLVYRL…RNLQVIKEAI (64 aa).

Belongs to the universal ribosomal protein uS4 family. As to quaternary structure, part of the 30S ribosomal subunit. Contacts protein S5. The interaction surface between S4 and S5 is involved in control of translational fidelity.

In terms of biological role, one of the primary rRNA binding proteins, it binds directly to 16S rRNA where it nucleates assembly of the body of the 30S subunit. With S5 and S12 plays an important role in translational accuracy. The chain is Small ribosomal subunit protein uS4 from Geobacillus thermodenitrificans (strain NG80-2).